An 854-amino-acid chain; its full sequence is ATP-dependent Clp protease ATP-binding subunit ClpA homolog (854 aa).

The 143-residue stretch at 33–175 (FERFTEKAVK…RSNIIRMIGE (143 aa)) folds into the Clp R domain. Repeat regions lie at residues 36 to 101 (FTEK…IGRG) and 111 to 175 (FTPR…MIGE). 238–245 (GEPGVGKT) lines the ATP pocket. The region spanning 447-482 (DEELRHIQKIKNELIRSGDFEEASQFREREIEVKVQ) is the UVR domain. Position 579 to 586 (579 to 586 (GPTGVGKT)) interacts with ATP.

The protein belongs to the ClpA/ClpB family.

It is found in the plastid. The protein localises to the chloroplast. Functionally, may interact with a ClpP-like protease involved in degradation of denatured proteins in the chloroplast. The chain is ATP-dependent Clp protease ATP-binding subunit ClpA homolog (clpC) from Cyanidium caldarium (Red alga).